The following is a 292-amino-acid chain: MLSRDQHCFTFAKRFSFLVCIRIVNMIVVKVGGSDGIDYDAVCADLAERWQAGEKLILVHGGSGETNRVAEALGHPPKFVTSPSGYTSRFTDRQTLEIFEMVYCGKMNKGLVERLQRLGVNAVGLSGLDGRIFEGKHKDSVRSVENGKVKVLRGDHTGTVEKVNTGLIELLLGAGYLPVLTPPAASYEGVAINVDGDRAAAQLAAALRAEALLLLSNVPGLLRDYPDEASLIREIPANDVESYLEFAQDRMKKKVLGAAEAVAGGVGRVVFGDARAGKPISAALAGEGTVVS.

Residues Arg89 and Asn193 each coordinate substrate.

Belongs to the acetylglutamate kinase family. LysZ subfamily.

Its subcellular location is the cytoplasm. The catalysed reaction is [amino-group carrier protein]-C-terminal-N-(1,4-dicarboxybutan-1-yl)-L-glutamine + ATP = [amino-group carrier protein]-C-terminal-N-(1-carboxy-5-phosphooxy-5-oxopentan-1-yl)-L-glutamine + ADP. It functions in the pathway amino-acid biosynthesis; L-lysine biosynthesis via AAA pathway; L-lysine from L-alpha-aminoadipate (Thermus route): step 2/5. In terms of biological role, catalyzes the phosphorylation of LysW-gamma-alpha-aminoadipate. This Deinococcus radiodurans (strain ATCC 13939 / DSM 20539 / JCM 16871 / CCUG 27074 / LMG 4051 / NBRC 15346 / NCIMB 9279 / VKM B-1422 / R1) protein is [LysW]-aminoadipate kinase.